The primary structure comprises 45 residues: Large ribosomal subunit protein bL34 (45 aa).

It belongs to the bacterial ribosomal protein bL34 family.

The polypeptide is Large ribosomal subunit protein bL34 (Acidothermus cellulolyticus (strain ATCC 43068 / DSM 8971 / 11B)).